The chain runs to 466 residues: Asparagine--tRNA ligase (466 aa).

It belongs to the class-II aminoacyl-tRNA synthetase family. Homodimer.

It is found in the cytoplasm. The catalysed reaction is tRNA(Asn) + L-asparagine + ATP = L-asparaginyl-tRNA(Asn) + AMP + diphosphate + H(+). In Shewanella baltica (strain OS155 / ATCC BAA-1091), this protein is Asparagine--tRNA ligase.